We begin with the raw amino-acid sequence, 371 residues long: Opine oxidase subunit B (371 aa).

Heterodimer of a subunit A and a subunit B.

The protein operates within opine metabolism; octopine degradation. In terms of biological role, oxidative cleavage of octopine into L-arginine and pyruvate. The polypeptide is Opine oxidase subunit B (ooxB) (Rhizobium meliloti (Ensifer meliloti)).